Reading from the N-terminus, the 426-residue chain is Glutamate-1-semialdehyde 2,1-aminomutase (426 aa).

K265 is modified (N6-(pyridoxal phosphate)lysine).

This sequence belongs to the class-III pyridoxal-phosphate-dependent aminotransferase family. HemL subfamily. Homodimer. It depends on pyridoxal 5'-phosphate as a cofactor.

The protein localises to the cytoplasm. It carries out the reaction (S)-4-amino-5-oxopentanoate = 5-aminolevulinate. It functions in the pathway porphyrin-containing compound metabolism; protoporphyrin-IX biosynthesis; 5-aminolevulinate from L-glutamyl-tRNA(Glu): step 2/2. The sequence is that of Glutamate-1-semialdehyde 2,1-aminomutase from Salmonella schwarzengrund (strain CVM19633).